The primary structure comprises 316 residues: N-acetyl-gamma-glutamyl-phosphate reductase (316 aa).

Residue cysteine 136 is part of the active site.

This sequence belongs to the NAGSA dehydrogenase family. Type 1 subfamily.

It is found in the cytoplasm. It carries out the reaction N-acetyl-L-glutamate 5-semialdehyde + phosphate + NADP(+) = N-acetyl-L-glutamyl 5-phosphate + NADPH + H(+). It functions in the pathway amino-acid biosynthesis; L-arginine biosynthesis; N(2)-acetyl-L-ornithine from L-glutamate: step 3/4. In terms of biological role, catalyzes the NADPH-dependent reduction of N-acetyl-5-glutamyl phosphate to yield N-acetyl-L-glutamate 5-semialdehyde. In Xanthomonas campestris pv. campestris (strain ATCC 33913 / DSM 3586 / NCPPB 528 / LMG 568 / P 25), this protein is N-acetyl-gamma-glutamyl-phosphate reductase.